The chain runs to 675 residues: UvrABC system protein B (675 aa).

Residues 32-417 (EGLSDGLAYQ…EHAGQVVEQV (386 aa)) form the Helicase ATP-binding domain. 45–52 (GVTGSGKT) lines the ATP pocket. The short motif at 98–121 (YYDYYQPEAYVPSRDLFIEKDSAI) is the Beta-hairpin element. Positions 436-602 (QVDDLMSEIN…QIKKQVKDII (167 aa)) constitute a Helicase C-terminal domain. In terms of domain architecture, UVR spans 634 to 669 (IKEIAKLEKAMQQAARDLQFEEAAVLRDRIRNIKEN).

It belongs to the UvrB family. As to quaternary structure, forms a heterotetramer with UvrA during the search for lesions. Interacts with UvrC in an incision complex.

It is found in the cytoplasm. Functionally, the UvrABC repair system catalyzes the recognition and processing of DNA lesions. A damage recognition complex composed of 2 UvrA and 2 UvrB subunits scans DNA for abnormalities. Upon binding of the UvrA(2)B(2) complex to a putative damaged site, the DNA wraps around one UvrB monomer. DNA wrap is dependent on ATP binding by UvrB and probably causes local melting of the DNA helix, facilitating insertion of UvrB beta-hairpin between the DNA strands. Then UvrB probes one DNA strand for the presence of a lesion. If a lesion is found the UvrA subunits dissociate and the UvrB-DNA preincision complex is formed. This complex is subsequently bound by UvrC and the second UvrB is released. If no lesion is found, the DNA wraps around the other UvrB subunit that will check the other stand for damage. In Neisseria meningitidis serogroup A / serotype 4A (strain DSM 15465 / Z2491), this protein is UvrABC system protein B.